The following is a 191-amino-acid chain: Holliday junction branch migration complex subunit RuvA (191 aa).

The tract at residues Met-1–Gly-64 is domain I. Residues Ser-65 to Leu-138 are domain II. The flexible linker stretch occupies residues Leu-138–Val-141. The tract at residues Pro-142–Ala-191 is domain III.

The protein belongs to the RuvA family. As to quaternary structure, homotetramer. Forms an RuvA(8)-RuvB(12)-Holliday junction (HJ) complex. HJ DNA is sandwiched between 2 RuvA tetramers; dsDNA enters through RuvA and exits via RuvB. An RuvB hexamer assembles on each DNA strand where it exits the tetramer. Each RuvB hexamer is contacted by two RuvA subunits (via domain III) on 2 adjacent RuvB subunits; this complex drives branch migration. In the full resolvosome a probable DNA-RuvA(4)-RuvB(12)-RuvC(2) complex forms which resolves the HJ.

The protein resides in the cytoplasm. The RuvA-RuvB-RuvC complex processes Holliday junction (HJ) DNA during genetic recombination and DNA repair, while the RuvA-RuvB complex plays an important role in the rescue of blocked DNA replication forks via replication fork reversal (RFR). RuvA specifically binds to HJ cruciform DNA, conferring on it an open structure. The RuvB hexamer acts as an ATP-dependent pump, pulling dsDNA into and through the RuvAB complex. HJ branch migration allows RuvC to scan DNA until it finds its consensus sequence, where it cleaves and resolves the cruciform DNA. The protein is Holliday junction branch migration complex subunit RuvA of Thiobacillus denitrificans (strain ATCC 25259 / T1).